We begin with the raw amino-acid sequence, 288 residues long: Pyrroline-5-carboxylate reductase 3 (288 aa).

Belongs to the pyrroline-5-carboxylate reductase family. Homodecamer; composed of 5 homodimers.

It is found in the cytoplasm. The catalysed reaction is L-proline + NADP(+) = (S)-1-pyrroline-5-carboxylate + NADPH + 2 H(+). The enzyme catalyses L-proline + NAD(+) = (S)-1-pyrroline-5-carboxylate + NADH + 2 H(+). The protein operates within amino-acid biosynthesis; L-proline biosynthesis; L-proline from L-glutamate 5-semialdehyde: step 1/1. Functionally, oxidoreductase that catalyzes the last step in proline biosynthesis, which corresponds to the reduction of pyrroline-5-carboxylate (P5C) to L-proline using NAD(P)H. Proline is synthesized from either glutamate or ornithine; both are converted to P5C, and then to proline via pyrroline-5-carboxylate reductases (PYCRs). PYCR3 is exclusively linked to the biosynthesis of proline from ornithine. The polypeptide is Pyrroline-5-carboxylate reductase 3 (Danio rerio (Zebrafish)).